The primary structure comprises 723 residues: MKPTSLLLAATVLMSTPITSALAASATPPDVAKKPHVVKAPHGAERNDEYYWLRDDKRENKEMLAYLNAENAYTDAVMAPLKPLEDKLYDEVVARIKQDDASVPYRERGWWYYARFVTGKDYPVHARRKDGPGVDAVSIQAANAAGDFAGEQVLLDVNALGAGKDYYNVGDYEVSQDNRLLAYADDTNGRRQYTIRFKNLDTGELLPDTVTNAEPNLVWSDDGRTLFYVDKDPETLLSKRVKAHVLGTPASQDALVYEEEDDSFYMGIGRSRDDKFICISVESTVSSEMRCTPAASPGVFTVLAPRERDVEYQADHLGDRWVIRTNADGATNFKIVTAPTDSTSRKDWKDWVAHRDDVFVEGFELFDGFSVVAERANALESLRVIKADGSSDYVKADESAYSMGLSANPETGTDWLRYSYTSMTTPATTYEINTKTGERRQLKQQPVPGYDASKYVTERVWAPARDGKTKIPVTLVYRKDVARDGKAPMLQYAYGSYGASMDPNFSITNVSLLDRGVVYALAHIRGGQEMGRAWYDDGKLYNKINTFTDFIDVTDYLVKEGYAAKDRVAAMGGSAGGLLMGAVSNMAPEKYKVILTLVPFVDVVTTMLDPTIPLTTNEYDEWGNPEEKGYYDYILTYSPYDNLQAKAYPAMFVGTGLWDSQVQYWEPAKYVARLRDLNTGKGPVVFRTNMEAGHGGKSGRFRQYRERAEMFAFMLDQLGVASK.

The N-terminal stretch at 1–23 is a signal peptide; that stretch reads MKPTSLLLAATVLMSTPITSALA. Catalysis depends on charge relay system residues Ser-574, Asp-659, and His-694.

Belongs to the peptidase S9A family. As to quaternary structure, monomer.

Nearly completely inhibited by 0.5 mM ZnCl(2), 0.1 mM N-tosyl-L-lysyl chloromethyl ketone (TLCK) and 0.1 mM leupeptin. Strongly inhibited by 0.5 mM CoCl(2) and 0.1 mM chymostatin. Activity is hardly affected by general serine protease inhibitors phenylmethanesulfonyl fluoride (PMSF), diisopropyl fluorophosphate (DFP) and N-tosyl-L-phenyl-alanyl chloromethyl ketone (TPCK) or by aspartyl protease inhibitor pepstatin A or by CaCl(2) and EDTA. Cysteine protease inhibitors, such as N-ethylmaleimide (NEM), iodoacetic acid and L-trans-epoxysuccinyl-leucylamido(4-guanido)butane (E-64) have no effect on activity. In terms of biological role, sequentially removes dipeptide units (NH3-P2-P1-) from the amino termini of peptides and proteins. Is able to catalyze the removal of Asp-Arg from the amino termini of angiotensins I and II. Has slight endopeptidase activity on N-terminally blocked peptide derivatives which contain arginine residues at the P1 position. Does not hydrolyze Ala-Ala-Ala and Ala-Ala-Ala-Ala substrates or insulin beta chain. This chain is Dipeptidyl aminopeptidase BI, found in Pseudoxanthomonas mexicana.